The following is a 131-amino-acid chain: Small ribosomal subunit protein uS8 (131 aa).

This sequence belongs to the universal ribosomal protein uS8 family. In terms of assembly, part of the 30S ribosomal subunit. Contacts proteins S5 and S12.

Functionally, one of the primary rRNA binding proteins, it binds directly to 16S rRNA central domain where it helps coordinate assembly of the platform of the 30S subunit. The sequence is that of Small ribosomal subunit protein uS8 from Zymomonas mobilis subsp. mobilis (strain ATCC 31821 / ZM4 / CP4).